Here is a 437-residue protein sequence, read N- to C-terminus: Enolase (437 aa).

Gln162 is a (2R)-2-phosphoglycerate binding site. Glu204 (proton donor) is an active-site residue. 3 residues coordinate Mg(2+): Asp251, Glu297, and Asp324. Residues Lys349, Arg378, Ser379, and Lys400 each coordinate (2R)-2-phosphoglycerate. Lys349 acts as the Proton acceptor in catalysis.

This sequence belongs to the enolase family. It depends on Mg(2+) as a cofactor.

The protein resides in the cytoplasm. The protein localises to the secreted. It localises to the cell surface. It carries out the reaction (2R)-2-phosphoglycerate = phosphoenolpyruvate + H2O. It functions in the pathway carbohydrate degradation; glycolysis; pyruvate from D-glyceraldehyde 3-phosphate: step 4/5. In terms of biological role, catalyzes the reversible conversion of 2-phosphoglycerate (2-PG) into phosphoenolpyruvate (PEP). It is essential for the degradation of carbohydrates via glycolysis. The polypeptide is Enolase (Pelodictyon phaeoclathratiforme (strain DSM 5477 / BU-1)).